The primary structure comprises 37 residues: Kappa-actitoxin-Bcs3b (37 aa).

Residues C2–C37 form the ShKT domain. 3 cysteine pairs are disulfide-bonded: C2–C37, C11–C30, and C20–C34. Residues K25–Y26 are crucial for binding to potassium channels.

This sequence belongs to the sea anemone type 1 potassium channel toxin family. Type 1b subfamily.

The protein localises to the secreted. It is found in the nematocyst. Inhibits voltage-gated potassium channels (IC(50)=14.42 nM for rKCNA1/Kv1.1, IC(50)=80.4 nM for rKCNA2/Kv1.2, IC(50)=7.76 nM for rKCNA6/Kv1.6, IC(50)=13.12 nM for hKCNA3/Kv1.3, and IC(50)=49.14 nM for insect Shaker IR). Binds the Shaker IR channels in a voltage-independent manner. This is Kappa-actitoxin-Bcs3b from Bunodosoma caissarum (Sea anemone).